An 816-amino-acid chain; its full sequence is Mechanosensitive cation channel TMEM63B (816 aa).

Topologically, residues 1–46 (MLPYVIATLGSAGSTCKASTCSNSTKDYCYSARIRSTVLQGLPFGG) are extracellular. The chain crosses the membrane as a helical span at residues 47–71 (VPTVLALDFMCFLALLFVFSILRKV). 2 S-palmitoyl cysteine lipidation sites follow: C57 and C119. At 72 to 138 (AWDYGRLALV…KDDEIRDKCG (67 aa)) the chain is on the cytoplasmic side. The helical transmembrane segment at 139–171 (GDAVHYLSFQRHIIGLLVAVGVLSVGIVLPVNF) threads the bilayer. At 172 to 195 (SGDLLENNAYSFGRTTIANLNSGN) the chain is on the extracellular side. The chain crosses the membrane as a helical span at residues 196 to 220 (NLLWLHTSFAFLYLLLTVYSMRRHT). Residues 221–420 (SKMRYKEDDL…IYWEHLSIRG (200 aa)) are Cytoplasmic-facing. Positions 224-419 (RYKEDDLVKR…NIYWEHLSIR (196 aa)) are intracellular linker IL2; confers mechanosensitivity. Residues C375 and C391 are each lipidated (S-palmitoyl cysteine). A helical membrane pass occupies residues 421–450 (FIWWIRCLVINVVLFILLFFLTTPAIIITT). The Extracellular segment spans residues 451–465 (MDKFNVTKPVEYLNN). The chain crosses the membrane as a helical span at residues 466 to 495 (PIITQFFPTLLLWCFSALLPTIVYYSAFFE). At 496 to 499 (AHWT) the chain is on the cytoplasmic side. A helical transmembrane segment spans residues 500-536 (RSGENRTTMHKCYTFLIFMVLLLPSLGLSSLDVFFRW). The Extracellular portion of the chain corresponds to 537 to 559 (LFDKKFLAEAAVRFECVFLPDNG). The chain crosses the membrane as a helical span at residues 560-592 (AFFVNYVIASAFIGNAMDLLRIPGLLMYMIRLC). The tract at residues 560–592 (AFFVNYVIASAFIGNAMDLLRIPGLLMYMIRLC) is gating helix. Over 593–612 (LARSAAERRNVKRHQAYEFQ) the chain is Cytoplasmic. The chain crosses the membrane as a helical span at residues 613 to 631 (FGAAYAWMMCVFTVVMTYS). Topologically, residues 632–634 (ITC) are extracellular. A helical transmembrane segment spans residues 635–659 (PIIVPFGLMYMLLKHLVDRYNLYYA). Topologically, residues 660–666 (YLPAKLD) are cytoplasmic. The helical transmembrane segment at 667–695 (KKIHSGAVNQVVAAPILCLFWLLFFSTMR) threads the bilayer. The Extracellular segment spans residues 696-700 (TGFLA). Residues 701-721 (PTSMFTFVVLVITIVICLCHV) traverse the membrane as a helical segment. Residues C719 and C722 are each lipidated (S-palmitoyl cysteine). At 722 to 816 (CFGHFKYLSA…DSLIENEIRQ (95 aa)) the chain is on the cytoplasmic side.

The protein belongs to the CSC1 (TC 1.A.17) family. As to quaternary structure, monomer. In terms of processing, palmitoylation is required for localization to the plasma membrane and stability.

The protein localises to the cell membrane. Its subcellular location is the lysosome membrane. The protein resides in the early endosome membrane. The catalysed reaction is Ca(2+)(in) = Ca(2+)(out). It catalyses the reaction Mg(2+)(in) = Mg(2+)(out). It carries out the reaction K(+)(in) = K(+)(out). The enzyme catalyses Na(+)(in) = Na(+)(out). The catalysed reaction is Cs(+)(in) = Cs(+)(out). Its function is as follows. Mechanosensitive cation channel with low conductance and high activation threshold. Osmosensitive cation channel preferentially activated by hypotonic stress. Also acts as a phospholipid scramblase in response to changes in membrane structure: upon changes in membrane curvature and thickness, alters its conformation and translocates phospholipids, thereby controlling plasma membrane lipid distribution. The polypeptide is Mechanosensitive cation channel TMEM63B (Gallus gallus (Chicken)).